Here is a 631-residue protein sequence, read N- to C-terminus: Vacuolar-sorting receptor 6 (631 aa).

Positions 1 to 25 (MSLIHKGATLALFLALTMVVNGVFG) are cleaved as a signal peptide. Residues 26–563 (RFIVEKSSVT…CIERSGSRIG (538 aa)) lie on the Lumenal side of the membrane. One can recognise a PA domain in the interval 57–165 (NYGGYMIGSV…SFANTLKQAL (109 aa)). 2 N-linked (GlcNAc...) asparagine glycosylation sites follow: Asn-294 and Asn-431. 2 EGF-like domains span residues 413–463 (ETNE…TSCE) and 494–540 (ETSG…FECK). 5 disulfide bridges follow: Cys-417–Cys-435, Cys-424–Cys-444, Cys-446–Cys-462, Cys-498–Cys-511, and Cys-530–Cys-539. Residues 564–584 (WFPTFVILAAVASICVGGYVF) traverse the membrane as a helical segment. The Cytoplasmic segment spans residues 585 to 631 (YKYRLRSYMDSEIMAIMSQYMPLESQNTTDPMTGESQHQQLRLTSAA). The short motif at 604–607 (YMPL) is the Tyrosine-based internalization motif element. Positions 610 to 631 (QNTTDPMTGESQHQQLRLTSAA) are disordered.

The protein belongs to the VSR (BP-80) family. In terms of tissue distribution, expressed in seedlings, roots, leaves, flowers and siliques.

The protein localises to the membrane. The protein resides in the golgi apparatus membrane. It localises to the cytoplasmic vesicle. Its subcellular location is the clathrin-coated vesicle membrane. It is found in the prevacuolar compartment membrane. In terms of biological role, vacuolar-sorting receptor (VSR) involved in clathrin-coated vesicles sorting from Golgi apparatus to vacuoles. The sequence is that of Vacuolar-sorting receptor 6 (VSR6) from Arabidopsis thaliana (Mouse-ear cress).